The chain runs to 206 residues: Large ribosomal subunit protein uL4 (206 aa).

Residues 65 to 85 (KQKGSGGARHGDRKAPQFRGG) are disordered.

Belongs to the universal ribosomal protein uL4 family. As to quaternary structure, part of the 50S ribosomal subunit.

Functionally, one of the primary rRNA binding proteins, this protein initially binds near the 5'-end of the 23S rRNA. It is important during the early stages of 50S assembly. It makes multiple contacts with different domains of the 23S rRNA in the assembled 50S subunit and ribosome. Forms part of the polypeptide exit tunnel. This is Large ribosomal subunit protein uL4 from Parvibaculum lavamentivorans (strain DS-1 / DSM 13023 / NCIMB 13966).